The following is a 261-amino-acid chain: Large ribosomal subunit protein uL3 (261 aa).

Residues 138-148 show a composition bias toward low complexity; sequence SVSHRSHGSTG. Disordered regions lie at residues 138-163 and 214-261; these read SVSH…KKMA and ADAP…GDQA. Residue Gln151 is modified to N5-methylglutamine. Low complexity predominate over residues 227-261; it reads APTPVEAAADEAAPAEEPAVTEAPAAEATEAGDQA.

Belongs to the universal ribosomal protein uL3 family. In terms of assembly, part of the 50S ribosomal subunit. Forms a cluster with proteins L14 and L19. Post-translationally, methylated by PrmB.

Its function is as follows. One of the primary rRNA binding proteins, it binds directly near the 3'-end of the 23S rRNA, where it nucleates assembly of the 50S subunit. The polypeptide is Large ribosomal subunit protein uL3 (Phenylobacterium zucineum (strain HLK1)).